Here is a 459-residue protein sequence, read N- to C-terminus: Lipase 4 (459 aa).

A signal peptide spans 1–14 (MLFLLFLLVAPIYA). The cysteines at positions 110 and 281 are disulfide-linked. Serine 194 acts as the Charge relay system in catalysis. N-linked (GlcNAc...) asparagine glycosylation is found at asparagine 229 and asparagine 266. Active-site charge relay system residues include aspartate 343 and histidine 376. A disulfide bridge links cysteine 359 with cysteine 404.

Belongs to the AB hydrolase superfamily. Lipase family. Class Lip subfamily.

The protein resides in the secreted. It carries out the reaction a triacylglycerol + H2O = a diacylglycerol + a fatty acid + H(+). Secreted lipase that is able to hydrolyze both the neutral triacylglycerols and the monopalmitate ester Tween 40, allowing the use of hydrolyzed products as carbon sources. Has broad lipolytic activity, which may be important for colonization and subsequent infection, therefore contributing to the persistence and virulence in human tissue. The polypeptide is Lipase 4 (Candida albicans (strain SC5314 / ATCC MYA-2876) (Yeast)).